A 297-amino-acid chain; its full sequence is MKTLVVALGGNALLQRGEALTAENQYRNIASAVPALARLARSYRLAIVHGNGPQVGLLALQNLAWKEVEPYPLDVLVAESQGMIGYMLAQSLSAQPQMPHVTTVLTRIEVSPDDPAFLQPEKFIGPVYQPEEQEALEATYGWQMKRDGKYLRRVVASPQPRKILDSEAIELLLKEGHVVICSGGGGVPVTEDGAGSEAVIDKDLAAALLAEQINADGLVILTDADAVYENWGTPQQRAIRHATPDELAPFAKADGSMGPKVTAVSGYVRSRGKPAWIGALSRIEETLAGEAGTCISL.

This sequence belongs to the carbamate kinase family.

It localises to the cytoplasm. It carries out the reaction hydrogencarbonate + NH4(+) + ATP = carbamoyl phosphate + ADP + H2O + H(+). The catalysed reaction is carbamate + ATP = carbamoyl phosphate + ADP. It catalyses the reaction hydrogencarbonate + NH4(+) = carbamate + H2O + H(+). It functions in the pathway nitrogen metabolism; (S)-allantoin degradation. Functionally, kinase involved in the anaerobic nitrogen utilization via the assimilation of allantoin. Catalyzes the transfer of a phosphate group from carbamoyl phosphate to ADP to produce ATP and leave carbamate, which spontaneously hydrolyzes to ammonia and hydrogencarbonate. The polypeptide is Carbamate kinase (Escherichia coli O6:H1 (strain CFT073 / ATCC 700928 / UPEC)).